We begin with the raw amino-acid sequence, 114 residues long: T cell receptor beta variable 4-2 (114 aa).

The signal sequence occupies residues 1–21; the sequence is MGCRLLCCAVLCLLGAVPMET. The region spanning 22 to 114 is the Ig-like domain; that stretch reads GVTQTPRHLV…SALYLCASSQ (93 aa). C42 and C110 form a disulfide bridge. N-linked (GlcNAc...) asparagine glycans are attached at residues N76 and N89.

Alpha-beta TR is a heterodimer composed of an alpha and beta chain; disulfide-linked. The alpha-beta TR is associated with the transmembrane signaling CD3 coreceptor proteins to form the TR-CD3 (TcR or TCR). The assembly of alpha-beta TR heterodimers with CD3 occurs in the endoplasmic reticulum where a single alpha-beta TR heterodimer associates with one CD3D-CD3E heterodimer, one CD3G-CD3E heterodimer and one CD247 homodimer forming a stable octameric structure. CD3D-CD3E and CD3G-CD3E heterodimers preferentially associate with TR alpha and TR beta chains, respectively. The association of the CD247 homodimer is the last step of TcR assembly in the endoplasmic reticulum and is required for transport to the cell surface.

Its subcellular location is the cell membrane. In terms of biological role, v region of the variable domain of T cell receptor (TR) beta chain that participates in the antigen recognition. Alpha-beta T cell receptors are antigen specific receptors which are essential to the immune response and are present on the cell surface of T lymphocytes. Recognize peptide-major histocompatibility (MH) (pMH) complexes that are displayed by antigen presenting cells (APC), a prerequisite for efficient T cell adaptive immunity against pathogens. Binding of alpha-beta TR to pMH complex initiates TR-CD3 clustering on the cell surface and intracellular activation of LCK that phosphorylates the ITAM motifs of CD3G, CD3D, CD3E and CD247 enabling the recruitment of ZAP70. In turn ZAP70 phosphorylates LAT, which recruits numerous signaling molecules to form the LAT signalosome. The LAT signalosome propagates signal branching to three major signaling pathways, the calcium, the mitogen-activated protein kinase (MAPK) kinase and the nuclear factor NF-kappa-B (NF-kB) pathways, leading to the mobilization of transcription factors that are critical for gene expression and essential for T cell growth and differentiation. The T cell repertoire is generated in the thymus, by V-(D)-J rearrangement. This repertoire is then shaped by intrathymic selection events to generate a peripheral T cell pool of self-MH restricted, non-autoaggressive T cells. Post-thymic interaction of alpha-beta TR with the pMH complexes shapes TR structural and functional avidity. This Homo sapiens (Human) protein is T cell receptor beta variable 4-2.